The sequence spans 24 residues: Brevinin-1GRa (24 aa).

As to expression, expressed by the skin glands.

It localises to the secreted. Functionally, antimicrobial peptide active against the Gram-positive bacterium S.aureus (MIC=12.5 uM) and against the Gram-negative bacteria E.coli (MIC=25 uM). In Odorrana grahami (Yunnanfu frog), this protein is Brevinin-1GRa.